A 357-amino-acid polypeptide reads, in one-letter code: GTPase Obg (357 aa).

Positions 1–159 constitute an Obg domain; sequence MKFVDEAFID…RNLKLELKVL (159 aa). One can recognise an OBG-type G domain in the interval 160 to 334; sequence ADVGLLGMPN…LIQAIYQHVR (175 aa). GTP contacts are provided by residues 166 to 173, 191 to 195, 213 to 216, 284 to 287, and 315 to 317; these read GMPNAGKS, FTTLH, DIPG, NKLD, and SAL. 2 residues coordinate Mg(2+): Ser173 and Thr193.

Belongs to the TRAFAC class OBG-HflX-like GTPase superfamily. OBG GTPase family. As to quaternary structure, monomer. It depends on Mg(2+) as a cofactor.

Its subcellular location is the cytoplasm. Its function is as follows. An essential GTPase which binds GTP, GDP and possibly (p)ppGpp with moderate affinity, with high nucleotide exchange rates and a fairly low GTP hydrolysis rate. Plays a role in control of the cell cycle, stress response, ribosome biogenesis and in those bacteria that undergo differentiation, in morphogenesis control. This chain is GTPase Obg, found in Paracidovorax citrulli (strain AAC00-1) (Acidovorax citrulli).